A 361-amino-acid chain; its full sequence is Porphobilinogen deaminase (361 aa).

Serine 2 is subject to N-acetylserine. Serine 69 carries the phosphoserine modification. Residue lysine 74 is modified to N6-acetyllysine. Serine 147 bears the Phosphoserine mark. The residue at position 261 (cysteine 261) is an S-(dipyrrolylmethanemethyl)cysteine.

The protein belongs to the HMBS family. In terms of assembly, monomer. It depends on dipyrromethane as a cofactor.

Its subcellular location is the cytoplasm. The protein localises to the cytosol. The catalysed reaction is 4 porphobilinogen + H2O = hydroxymethylbilane + 4 NH4(+). It participates in porphyrin-containing compound metabolism; protoporphyrin-IX biosynthesis; coproporphyrinogen-III from 5-aminolevulinate: step 2/4. Its function is as follows. As part of the heme biosynthetic pathway, catalyzes the sequential polymerization of four molecules of porphobilinogen to form hydroxymethylbilane, also known as preuroporphyrinogen. Catalysis begins with the assembly of the dipyrromethane cofactor by the apoenzyme from two molecules of porphobilinogen or from preuroporphyrinogen. The covalently linked cofactor acts as a primer, around which the tetrapyrrole product is assembled. In the last step of catalysis, the product, preuroporphyrinogen, is released, leaving the cofactor bound to the holodeaminase intact. This is Porphobilinogen deaminase (Hmbs) from Rattus norvegicus (Rat).